Consider the following 264-residue polypeptide: 3-methyl-2-oxobutanoate hydroxymethyltransferase (264 aa).

Positions 45 and 84 each coordinate Mg(2+). 3-methyl-2-oxobutanoate-binding positions include D45–S46, D84, and K112. Position 114 (E114) interacts with Mg(2+). The Proton acceptor role is filled by E181.

This sequence belongs to the PanB family. As to quaternary structure, homodecamer; pentamer of dimers. Requires Mg(2+) as cofactor.

It is found in the cytoplasm. The catalysed reaction is 3-methyl-2-oxobutanoate + (6R)-5,10-methylene-5,6,7,8-tetrahydrofolate + H2O = 2-dehydropantoate + (6S)-5,6,7,8-tetrahydrofolate. Its pathway is cofactor biosynthesis; (R)-pantothenate biosynthesis; (R)-pantoate from 3-methyl-2-oxobutanoate: step 1/2. In terms of biological role, catalyzes the reversible reaction in which hydroxymethyl group from 5,10-methylenetetrahydrofolate is transferred onto alpha-ketoisovalerate to form ketopantoate. This is 3-methyl-2-oxobutanoate hydroxymethyltransferase from Vibrio cholerae serotype O1 (strain ATCC 39541 / Classical Ogawa 395 / O395).